We begin with the raw amino-acid sequence, 397 residues long: S-adenosylmethionine:tRNA ribosyltransferase-isomerase (397 aa).

The protein belongs to the QueA family. Monomer.

The protein resides in the cytoplasm. The enzyme catalyses 7-aminomethyl-7-carbaguanosine(34) in tRNA + S-adenosyl-L-methionine = epoxyqueuosine(34) in tRNA + adenine + L-methionine + 2 H(+). It participates in tRNA modification; tRNA-queuosine biosynthesis. Functionally, transfers and isomerizes the ribose moiety from AdoMet to the 7-aminomethyl group of 7-deazaguanine (preQ1-tRNA) to give epoxyqueuosine (oQ-tRNA). The chain is S-adenosylmethionine:tRNA ribosyltransferase-isomerase from Nostoc sp. (strain PCC 7120 / SAG 25.82 / UTEX 2576).